A 776-amino-acid polypeptide reads, in one-letter code: Protein FAM83C (776 aa).

The DUF1669 stretch occupies residues 1–340 (MQGCQAGASI…LYAESQPVEG (340 aa)). Disordered stretches follow at residues 344 to 467 (NEDP…STSP), 494 to 565 (SRLP…SLQH), 617 to 653 (HGQL…DDRR), 669 to 694 (PFRS…VGSA), and 716 to 745 (QGAR…LFAP). Positions 368–385 (SATGSSPSSNSLSSIKHS) are enriched in low complexity. Residues 452 to 467 (PWSQSSPALNHSSTSP) show a composition bias toward polar residues. Over residues 523–539 (VEEKKVSLSQSHDHLDR) the composition is skewed to basic and acidic residues. Positions 554-563 (SRVTPDSSSL) are enriched in polar residues.

The protein belongs to the FAM83 family. In terms of assembly, directly interacts (via DUF1669) with CSNK1A1 and CSNK1A1L. May interact with RAF1. Post-translationally, phosphorylated by CSNK1A1.

It is found in the cytoplasm. In terms of biological role, may play a role in MAPK signaling. This chain is Protein FAM83C, found in Mus musculus (Mouse).